Here is a 962-residue protein sequence, read N- to C-terminus: Glycine dehydrogenase (decarboxylating) (962 aa).

Residue Lys-709 is modified to N6-(pyridoxal phosphate)lysine.

The protein belongs to the GcvP family. As to quaternary structure, the glycine cleavage system is composed of four proteins: P, T, L and H. Pyridoxal 5'-phosphate is required as a cofactor.

It catalyses the reaction N(6)-[(R)-lipoyl]-L-lysyl-[glycine-cleavage complex H protein] + glycine + H(+) = N(6)-[(R)-S(8)-aminomethyldihydrolipoyl]-L-lysyl-[glycine-cleavage complex H protein] + CO2. Functionally, the glycine cleavage system catalyzes the degradation of glycine. The P protein binds the alpha-amino group of glycine through its pyridoxal phosphate cofactor; CO(2) is released and the remaining methylamine moiety is then transferred to the lipoamide cofactor of the H protein. This chain is Glycine dehydrogenase (decarboxylating), found in Shewanella sp. (strain MR-7).